A 141-amino-acid chain; its full sequence is Protein Turandot Z (141 aa).

The signal sequence occupies residues 1 to 23 (MYFAIRLSFVLAVLFCLTGNGNA).

The protein belongs to the Turandot family.

It is found in the secreted. A humoral factor that may play a role in stress tolerance. The polypeptide is Protein Turandot Z (Drosophila yakuba (Fruit fly)).